Consider the following 261-residue polypeptide: Transmembrane protein 106A (261 aa).

A helical transmembrane segment spans residues 95–115 (VFLAVSICLVTSSLIIFFLFP).

This sequence belongs to the TMEM106 family.

Its subcellular location is the cell membrane. Activates macrophages and polarizes them into M1-like macrophages through the activation of the MAPK and NF-kappaB signaling pathway. Upon activation, up-regulates the expression of CD80, CD86, CD69 and MHC II on macrophages, and induces the release of pro-inflammatory cytokines such as TNF, IL1B, IL6, CCL2 and nitric oxide. May play a role in inhibition of proliferation and migration. The chain is Transmembrane protein 106A (TMEM106A) from Bos taurus (Bovine).